The chain runs to 242 residues: N-acetylmuramate alpha-1-phosphate uridylyltransferase (242 aa).

Residues glycine 16–arginine 18 and lysine 28 each bind UTP. Residue asparagine 113 participates in substrate binding. Aspartate 115 contacts Mg(2+). Aspartate 158 serves as a coordination point for substrate.

The protein belongs to the nucleotidyltransferase MurU family. As to quaternary structure, monomer. It depends on Mg(2+) as a cofactor.

It carries out the reaction N-acetyl-alpha-D-muramate 1-phosphate + UDP + H(+) = UDP-N-acetyl-alpha-D-muramate + phosphate. It participates in cell wall biogenesis; peptidoglycan recycling. Functionally, catalyzes the formation of UDP-N-acetylmuramate (UDP-MurNAc), a crucial precursor of the bacterial peptidoglycan cell wall, from UTP and MurNAc-alpha-1P. Is likely involved in peptidoglycan recycling as part of a cell wall recycling pathway that bypasses de novo biosynthesis of the peptidoglycan precursor UDP-MurNAc. Is able to complement the fosfomycin sensitivity phenotype of a P.putida mutant lacking murU. This is N-acetylmuramate alpha-1-phosphate uridylyltransferase from Caulobacter vibrioides (strain ATCC 19089 / CIP 103742 / CB 15) (Caulobacter crescentus).